A 292-amino-acid polypeptide reads, in one-letter code: Histamine N-methyltransferase (292 aa).

Residue Glu-28 coordinates substrate. Residues Gly-60, Glu-89, and Ile-142 each contribute to the S-adenosyl-L-methionine site. Asn-283 is a binding site for substrate.

This sequence belongs to the class I-like SAM-binding methyltransferase superfamily. HNMT family. Monomer.

It localises to the cytoplasm. The catalysed reaction is histamine + S-adenosyl-L-methionine = N(tau)-methylhistamine + S-adenosyl-L-homocysteine + H(+). In terms of biological role, inactivates histamine by N-methylation. Plays an important role in degrading histamine and in regulating the airway response to histamine. The chain is Histamine N-methyltransferase (hnmt) from Danio rerio (Zebrafish).